We begin with the raw amino-acid sequence, 401 residues long: Multidrug resistance protein MdtH (401 aa).

11 consecutive transmembrane segments (helical) span residues 13–33 (YFLL…FPLI), 34–54 (SIHF…ALGL), 78–95 (MIVT…FIAL), 99–116 (PWIL…GTLF), 139–159 (LLLM…SWLL), 165–185 (FVCW…ALFL), 214–234 (VLTL…FPII), 243–263 (AAVK…LYPI), 289–309 (FPVG…LFYL), 340–360 (LGLA…YDTG), and 365–385 (IPQL…YALH).

Belongs to the major facilitator superfamily. DHA1 family. MdtH (TC 2.A.1.2.21) subfamily.

The protein resides in the cell inner membrane. The sequence is that of Multidrug resistance protein MdtH from Photorhabdus laumondii subsp. laumondii (strain DSM 15139 / CIP 105565 / TT01) (Photorhabdus luminescens subsp. laumondii).